Here is a 507-residue protein sequence, read N- to C-terminus: Phospho-2-dehydro-3-deoxyheptonate aldolase 2, chloroplastic (507 aa).

This sequence belongs to the class-II DAHP synthase family.

Its subcellular location is the plastid. It is found in the chloroplast. It catalyses the reaction D-erythrose 4-phosphate + phosphoenolpyruvate + H2O = 7-phospho-2-dehydro-3-deoxy-D-arabino-heptonate + phosphate. The protein operates within metabolic intermediate biosynthesis; chorismate biosynthesis; chorismate from D-erythrose 4-phosphate and phosphoenolpyruvate: step 1/7. This is Phospho-2-dehydro-3-deoxyheptonate aldolase 2, chloroplastic (DHS2) from Arabidopsis thaliana (Mouse-ear cress).